The chain runs to 212 residues: uncharacterized protein (212 aa).

This is an uncharacterized protein from Mycobacterium tuberculosis (strain ATCC 25618 / H37Rv).